Here is a 173-residue protein sequence, read N- to C-terminus: Crossover junction endodeoxyribonuclease RuvC (173 aa).

Active-site residues include Asp-8, Glu-67, and Asp-139. Residues Asp-8, Glu-67, and Asp-139 each coordinate Mg(2+).

The protein belongs to the RuvC family. In terms of assembly, homodimer which binds Holliday junction (HJ) DNA. The HJ becomes 2-fold symmetrical on binding to RuvC with unstacked arms; it has a different conformation from HJ DNA in complex with RuvA. In the full resolvosome a probable DNA-RuvA(4)-RuvB(12)-RuvC(2) complex forms which resolves the HJ. The cofactor is Mg(2+).

The protein localises to the cytoplasm. The catalysed reaction is Endonucleolytic cleavage at a junction such as a reciprocal single-stranded crossover between two homologous DNA duplexes (Holliday junction).. Its function is as follows. The RuvA-RuvB-RuvC complex processes Holliday junction (HJ) DNA during genetic recombination and DNA repair. Endonuclease that resolves HJ intermediates. Cleaves cruciform DNA by making single-stranded nicks across the HJ at symmetrical positions within the homologous arms, yielding a 5'-phosphate and a 3'-hydroxyl group; requires a central core of homology in the junction. The consensus cleavage sequence is 5'-(A/T)TT(C/G)-3'. Cleavage occurs on the 3'-side of the TT dinucleotide at the point of strand exchange. HJ branch migration catalyzed by RuvA-RuvB allows RuvC to scan DNA until it finds its consensus sequence, where it cleaves and resolves the cruciform DNA. The protein is Crossover junction endodeoxyribonuclease RuvC of Shewanella baltica (strain OS223).